The primary structure comprises 182 residues: Meiotically up-regulated gene 82 protein (182 aa).

Positions Glu-161 to Asp-182 are disordered. The segment covering Tyr-169–Asp-182 has biased composition (basic residues).

It belongs to the prokaryotic/mitochondrial release factor family.

The protein localises to the mitochondrion. Functionally, has a role in meiosis. This chain is Meiotically up-regulated gene 82 protein (mug82), found in Schizosaccharomyces pombe (strain 972 / ATCC 24843) (Fission yeast).